A 135-amino-acid chain; its full sequence is Ribosome-binding factor A (135 aa).

This sequence belongs to the RbfA family. Monomer. Binds 30S ribosomal subunits, but not 50S ribosomal subunits or 70S ribosomes.

The protein localises to the cytoplasm. One of several proteins that assist in the late maturation steps of the functional core of the 30S ribosomal subunit. Associates with free 30S ribosomal subunits (but not with 30S subunits that are part of 70S ribosomes or polysomes). Required for efficient processing of 16S rRNA. May interact with the 5'-terminal helix region of 16S rRNA. The polypeptide is Ribosome-binding factor A (Dinoroseobacter shibae (strain DSM 16493 / NCIMB 14021 / DFL 12)).